The sequence spans 713 residues: P-loop NTPase domain-containing protein LPA1 homolog (713 aa).

Disordered regions lie at residues 218–249 (AKKRSGISTTSTIDFDKTRPLNDKPDGKPIGK), 504–575 (TSQA…EDLS), and 650–713 (LDSP…APDK). Residues 231 to 246 (DFDKTRPLNDKPDGKP) show a composition bias toward basic and acidic residues. Residues 504-531 (TSQAGSVNESWDNANEGTGSHVPSSSGS) are compositionally biased toward polar residues. Residues 533–544 (KKLDGHCKEIKE) show a composition bias toward basic and acidic residues. The segment covering 551 to 562 (SDDDEEEEEEAA) has biased composition (acidic residues). Positions 656–668 (ARSSSALPISASS) are enriched in low complexity.

In terms of biological role, required for the accumulation of phytic acid in seeds. Phytic acid is the primary storage form of phosphorus in cereal grains and other plant seeds. The protein is P-loop NTPase domain-containing protein LPA1 homolog of Oryza sativa subsp. japonica (Rice).